The primary structure comprises 102 residues: Carboxysome shell protein CsoS1C (102 aa).

A BMC domain is found at 8-93 (ALGMIETRGL…PHKEVEPVLA (86 aa)).

It belongs to the bacterial microcompartments protein family. CsoS1 subfamily. In terms of assembly, homohexamer with a small central pore.

It localises to the carboxysome. Functionally, one of shell proteins of the carboxysome, a polyhedral inclusion where RuBisCO (ribulose bisphosphate carboxylase, ccbL-ccbS) is sequestered. Assembles into hexamers which make sheets that form the facets of the polyhedral carboxysome. The shell probably limits the diffusion of CO(2) into and out of the carboxysome. This Hydrogenovibrio crunogenus (strain DSM 25203 / XCL-2) (Thiomicrospira crunogena) protein is Carboxysome shell protein CsoS1C.